The primary structure comprises 670 residues: E3 ubiquitin-protein ligase TRAF7 (670 aa).

Disordered regions lie at residues 1-37 (MSSGKSARYNRFSGGPSNLPTPDVTTGTRMETTFGPA) and 49-97 (GTST…SLHS). 2 stretches are compositionally biased toward polar residues: residues 15 to 31 (GPSNLPTPDVTTGTRME) and 49 to 67 (GTSTYKQHCRTPSSSSTLA). Serine 61, serine 88, and serine 91 each carry phosphoserine. The segment at 131–165 (CQLCCSVFKDPVITTCGHTFCRRCALKSEKCPVDN) adopts an RING-type zinc-finger fold. The TRAF-type zinc finger occupies 222 to 276 (HEGSCDYRPVRCPNNPSCPPLLRMNLEAHLKECEHIKCPHSKYGCTFIGNQDTYE). WD repeat units lie at residues 394–433 (GHQGPVWCLCVYSMGDLLFSGSSDKTIKVWDTCTTYKCQK), 437–474 (GHDGIVLALCIQGCKLYSGSADCTIIVWDIQNLQKVNT), 477–513 (AHDNPVCTLVSSHNVLFSGSLKAIKVWDIVGTELKLK), 515–554 (ELTGLNHWVRALVAAQSYLYSGSYQTIKIWDIRTLDCIHV), 557–594 (TSGGSVYSIAVTNHHIVCGTYENLIHVWDIESKEQVRT), 597–638 (GHVG…CTQT), and 641–669 (RHQGSVTALAVSRGRLFSGAVDSTVKVWT).

This sequence belongs to the WD repeat TRAF7 family. As to quaternary structure, homodimer. Interacts with MAP3K3 and promotes the kinase activity of this enzyme. Post-translationally, phosphorylated by MAP3K3. In terms of processing, ubiquitinates itself upon phosphorylation. As to expression, ubiquitously expressed with high levels in skeletal muscle, heart, colon, spleen, kidney, liver and placenta.

It localises to the cytoplasmic vesicle. It is found in the cytoplasm. Its subcellular location is the nucleus. It carries out the reaction S-ubiquitinyl-[E2 ubiquitin-conjugating enzyme]-L-cysteine + [acceptor protein]-L-lysine = [E2 ubiquitin-conjugating enzyme]-L-cysteine + N(6)-ubiquitinyl-[acceptor protein]-L-lysine.. Its pathway is protein modification; protein ubiquitination. E3 ubiquitin and SUMO-protein ligase that plays a role in different biological processes such as innate immunity, inflammation or apoptosis. Potentiates MAP3K3-mediated activation of JUN/AP1 and DDIT3 transcriptional regulators. Negatively regulates MYB transcriptional activity by sequestering it to the cytosol via SUMOylation. Plays a role in the phosphorylation of MAPK1 and/or MAPK3, probably via its interaction with MAP3K3. Negatively regulates RLR-mediated innate immunity by promoting 'Lys-48'-linked ubiquitination of TBK1 through its RING domain to inhibit the cellular antiviral response. Promotes 'Lys-29'-linked polyubiquitination of NEMO/IKBKG and RELA leading to targeting these two proteins to lysosomal degradative pathways, reducing the transcriptional activity of NF-kappa-B. This Homo sapiens (Human) protein is E3 ubiquitin-protein ligase TRAF7 (TRAF7).